The chain runs to 2260 residues: Reducing polyketide synthase pksF (2260 aa).

Positions 20 to 445 constitute a Ketosynthase family 3 (KS3) domain; sequence VEPIAIVGFG…GTNAHVVLDD (426 aa). Catalysis depends on for beta-ketoacyl synthase activity residues Cys-194, His-329, and His-368. A malonyl-CoA:ACP transacylase (MAT) domain region spans residues 598–933; it reads FVFTGQGAQW…ECAGKLHTIG (336 aa). Ser-689 functions as the For malonyltransferase activity in the catalytic mechanism. The N-terminal hotdog fold stretch occupies residues 984 to 1121; it reads HELLGSRTPD…GYVAIEYDDR (138 aa). The dehydratase (DH) domain stretch occupies residues 984 to 1281; the sequence is HELLGSRTPD…FRNKLFSITA (298 aa). Residues 984-1306 form the PKS/mFAS DH domain; that stretch reads HELLGSRTPD…TSTIGRNSPS (323 aa). The Proton acceptor; for dehydratase activity role is filled by His-1016. Residues 1150–1306 form a C-terminal hotdog fold region; that stretch reads RIAIDSADIY…TSTIGRNSPS (157 aa). Catalysis depends on Asp-1216, which acts as the Proton donor; for dehydratase activity. The enoylreductase (ER) domain stretch occupies residues 1544-1859; it reads GILKTLHYEQ…DVDVVEKIVI (316 aa). Positions 1882-2104 are ketoreductase (KR) domain; that stretch reads PDASYLIAGA…LRFCCDPDRV (223 aa). The Carrier domain occupies 2174–2251; the sequence is QATDIVVEAI…LLAVKVAGKS (78 aa). O-(pantetheine 4'-phosphoryl)serine is present on Ser-2211.

Pantetheine 4'-phosphate is required as a cofactor.

Functionally, reducing polyketide synthase that catalyzes the formation of a C22 intermediate attached to the ACP. Release by intramolecular hydrolysis by the enolized delta-carbonyl would give the pyrone product aslanipyrone. Alternatively, KR-mediated reduction of the beta-carbonyl of the C22 intermediate would form a beta-hydroxy thioester intermediate, which could be a substrate for a further KS-mediated condensation of an additional C2 unit to form a C24 intermediate, which cyclizes by aldol condensation followed by decarboxylation to form aslaniol. Neither aslanipyrone, aslaniol, nor their derivatives have been detected in A.solani, probably due to a low abundance and/or extensive post-PKS modification. It is assumed that the branching point from C22 to C24 is the result of KR activity on the C22 intermediate anchored to the ACP. The sequence is that of Reducing polyketide synthase pksF from Alternaria solani.